Reading from the N-terminus, the 245-residue chain is 8-amino-3,8-dideoxy-manno-octulosonate cytidylyltransferase (245 aa).

This sequence belongs to the KdsB family.

The protein localises to the cytoplasm. The enzyme catalyses 8-amino-3,8-dideoxy-alpha-D-manno-octulosonate + CTP = CMP-8-amino-3,8-dideoxy-alpha-D-manno-oct-2-ulosonate + diphosphate. It functions in the pathway bacterial outer membrane biogenesis; lipopolysaccharide biosynthesis. In terms of biological role, activates KDO8N (a required 8-carbon sugar) for incorporation into bacterial lipopolysaccharide in the Shewanella genus. This Shewanella woodyi (strain ATCC 51908 / MS32) protein is 8-amino-3,8-dideoxy-manno-octulosonate cytidylyltransferase.